The primary structure comprises 578 residues: Vacuolar protein 8 (578 aa).

9 ARM repeats span residues 58 to 95, 96 to 135, 137 to 176, 178 to 217, 219 to 258, 262 to 301, 303 to 342, 344 to 384, and 428 to 467; these read NRAE…FAEI, TERD…NLAV, ADNK…NLAT, EDNK…NMTH, DDNR…NIAV, NRKR…NLAS, EKYQ…NISI, PLNE…NLAA, and DELK…NLSS.

This sequence belongs to the beta-catenin family.

It localises to the vacuole membrane. Functions in both vacuole inheritance and protein targeting from the cytoplasm to vacuole. The polypeptide is Vacuolar protein 8 (vac8) (Aspergillus oryzae (strain ATCC 42149 / RIB 40) (Yellow koji mold)).